Here is a 1902-residue protein sequence, read N- to C-terminus: Plexin-B3 (1902 aa).

The N-terminal stretch at 1–36 (MLTDFLQAPVMAPWSPFSLHLLLLFLPLLPLTRVHR) is a signal peptide. The Sema domain occupies 37-461 (FSVPNTSFNH…TAQQVDRILV (425 aa)). The Extracellular segment spans residues 37–1245 (FSVPNTSFNH…MMSTFPVEAQ (1209 aa)). Residue N41 is glycosylated (N-linked (GlcNAc...) asparagine). Intrachain disulfides connect C88-C97 and C122-C130. N221 carries N-linked (GlcNAc...) asparagine glycosylation. Intrachain disulfides connect C257/C360, C273/C305, and C323/C347. The segment at 353 to 372 (DSPESYPCGDEHTPSPIAGR) is disordered. N416 and N469 each carry an N-linked (GlcNAc...) asparagine glycan. Residues 463–515 (ACPQFPNCTTCLQARDPLCGWCILQGRCTRRGECGRAAQPNHWLWSYEDNHCP) form the PSI 1 domain. Disulfide bonds link C464–C481, C470–C514, C473–C490, C484–C496, and C551–C569. PSI domains follow at residues 609–671 (DCSA…EACP) and 776–822 (DCAM…QLCP). 6 N-linked (GlcNAc...) asparagine glycosylation sites follow: N791, N889, N910, N946, N1090, and N1207. IPT/TIG domains follow at residues 823–914 (IPSI…FTYQ), 915–1001 (DPVL…FRYT), 1003–1134 (NPQL…FLYQ), and 1154–1221 (KPGH…QMGN). The helical transmembrane segment at 1246–1266 (LGLGMGAAVLIAAVLLLTLMY) threads the bilayer. The Cytoplasmic segment spans residues 1267-1902 (RHKSKKALRD…ALVEYKVTDL (636 aa)).

This sequence belongs to the plexin family. In terms of assembly, binds MET and MST1R. Interacts with RIT2/RIN. May form homodimers (via Sema domain). Interacts (via cytoplasmic domain) with FSCN1, ARHGDIA and RAC1. In terms of tissue distribution, expressed in brain (at protein level). In cerebellum, strongest expression detected in Purkinje and granular cells. Detected at very low levels in several fetal tissues, including dorsal root ganglia (DRG), heart, lung, optic bulb, brain and liver.

Its subcellular location is the cell membrane. Functionally, receptor for SEMA5A that plays a role in axon guidance, invasive growth and cell migration. Stimulates neurite outgrowth and mediates Ca(2+)/Mg(2+)-dependent cell aggregation. In glioma cells, SEMA5A stimulation of PLXNB3 results in the disassembly of F-actin stress fibers, disruption of focal adhesions and cellular collapse as well as inhibition of cell migration and invasion through ARHGDIA-mediated inactivation of RAC1. Seem to be non-essential for normal development and function of the central nervous system. This is Plexin-B3 (Plxnb3) from Mus musculus (Mouse).